The following is a 99-amino-acid chain: C-C motif chemokine 17 (99 aa).

An N-terminal signal peptide occupies residues 1 to 23 (MMSLKLLLLVMLLLGASLQVTHA). Intrachain disulfides connect Cys33–Cys57 and Cys34–Cys73.

This sequence belongs to the intercrine beta (chemokine CC) family. Expressed in thymus and also in spleen, lung, lymph node, kidney, small intestine, colon and skin.

It localises to the secreted. Functionally, chemokine, which displays chemotactic activity for T lymphocytes, preferentially Th2 cells, but not monocytes or granulocytes. Therefore plays an important role in a wide range of inflammatory and immunological processes. Acts by binding to CCR4 at T-cell surface. Mediates GM-CSF/CSF2-driven pain and inflammation. In the brain, required to maintain the typical, highly branched morphology of hippocampal microglia under homeostatic conditions. May be important for the appropriate adaptation of microglial morphology and synaptic plasticity to acute lipopolysaccharide (LPS)-induced neuroinflammation. Plays a role in wound healing, mainly by inducing fibroblast migration into the wound. This chain is C-C motif chemokine 17 (CCL17), found in Felis catus (Cat).